We begin with the raw amino-acid sequence, 282 residues long: Putative phosphite transport system permease protein HtxC (282 aa).

The next 4 helical transmembrane spans lie at 23-43, 81-101, 130-150, and 239-259; these read HFAT…VCQI, LAMA…LALM, VYAL…VLAI, and FNKM…IDFI. Positions 77–260 constitute an ABC transmembrane type-1 domain; that stretch reads AGETLAMATI…LMVSAIDFIS (184 aa).

This sequence belongs to the binding-protein-dependent transport system permease family.

It localises to the cell inner membrane. Its function is as follows. Probably forms part of a binding-protein-dependent hypophosphite transporter. The polypeptide is Putative phosphite transport system permease protein HtxC (htxC) (Stutzerimonas stutzeri (Pseudomonas stutzeri)).